The sequence spans 266 residues: Proline-rich protein 23A (266 aa).

Low complexity predominate over residues 1 to 18 (MGSRPRSPSAFPAPWWGQ). Disordered stretches follow at residues 1-47 (MGSR…SLED) and 197-266 (EPCA…LFQE). The span at 227-238 (PSSPLQPLPPSP) shows a compositional bias: pro residues. Residues 255–266 (PPCKARRRLFQE) are compositionally biased toward basic residues.

The protein belongs to the PRR23 family.

In Homo sapiens (Human), this protein is Proline-rich protein 23A (PRR23A).